A 309-amino-acid chain; its full sequence is Taste receptor type 2 member 31 (309 aa).

At 1–2 (MI) the chain is on the extracellular side. The helical transmembrane segment at 3 to 23 (TFLPTIFSILVVVIFVIGNFG) threads the bilayer. The Cytoplasmic segment spans residues 24 to 55 (NGFIALVNSIEWVKRQKISFADQILTALAVSR). Residues 56 to 76 (VGLLWALLLNWYSTVFNPAFY) traverse the membrane as a helical segment. Residues 77 to 100 (SVGVRTTVYDVWTVTGHFSNWLAT) lie on the Extracellular side of the membrane. A helical transmembrane segment spans residues 101–121 (SLSIFYLLKIANFSNLIFLHL). Over 122–126 (KRRVK) the chain is Cytoplasmic. Residues 127 to 147 (SVILVMLLGPLLFLACQLFVI) form a helical membrane-spanning segment. Topologically, residues 148-181 (NMKEILRTKEYEGNMTWKIKLRSAMYLSDATITT) are extracellular. A glycan (N-linked (GlcNAc...) asparagine) is linked at N161. Residues 182–202 (LANLVPFTLTLLSFLLLICSL) traverse the membrane as a helical segment. Residues 203-229 (CKHLNKMQLHGKGSQDPSTKVHIKVLQ) are Cytoplasmic-facing. The helical transmembrane segment at 230-250 (TVISFLLLCAIYFLSIMISVW) threads the bilayer. Over 251-259 (SFGSLENKP) the chain is Extracellular. A helical membrane pass occupies residues 260 to 280 (VFMFCKAIRFSYPSIHPFILI). Over 281–309 (WGNKKLKQTFLSVLRQVRYWVKGEKPSSP) the chain is Cytoplasmic.

Belongs to the G-protein coupled receptor T2R family.

Its subcellular location is the membrane. Functionally, receptor that may play a role in the perception of bitterness and is gustducin-linked. May play a role in sensing the chemical composition of the gastrointestinal content. The activity of this receptor may stimulate alpha gustducin, mediate PLC-beta-2 activation and lead to the gating of TRPM5. The sequence is that of Taste receptor type 2 member 31 (TAS2R31) from Pongo pygmaeus (Bornean orangutan).